The primary structure comprises 649 residues: Thioredoxin reductase 1, cytoplasmic (649 aa).

N-acetylmethionine is present on M1. A disordered region spans residues 1 to 49; it reads MGCAEGKAVAAAAPTELQTKGKNGDGRRRSAKDHHPGKTLPENPAGFTS. A compositionally biased stretch (basic and acidic residues) spans 22–36; that stretch reads KNGDGRRRSAKDHHP. Positions 56–156 constitute a Glutaredoxin domain; it reads RALLQAYIDG…KLLKMNGPED (101 aa). The tract at residues 145 to 149 is required for interaction with ESR1 and ESR2; it reads LQKLL. FAD is bound by residues 172 to 173, 192 to 193, 208 to 209, and 213 to 217; these read SG, DF, TC, and GCIPK. An intrachain disulfide couples C209 to C214. Residue K218 is modified to N6-succinyllysine. Y281 carries the phosphotyrosine modification. FAD contacts are provided by residues 281-282 and T311; that span reads YG. Residues R316, 348-354, 371-372, R376, 376-378, 442-443, and K465 each bind NADP(+); these read ASYVALE, RS, RGF, and GR. Y350 is a binding site for FAD. FAD-binding positions include D484, 491 to 493, and H622; that span reads ELT. An NADP(+)-binding site is contributed by E491. The active-site Proton acceptor is H622. A cross-link (cysteinyl-selenocysteine (Cys-Sec)) is located at residues 647–648; sequence CU. Residue U648 is a non-standard amino acid, selenocysteine.

The protein belongs to the class-I pyridine nucleotide-disulfide oxidoreductase family. As to quaternary structure, homodimer. Interacts with HERC5. Interacts with ESR1 and ESR2. FAD is required as a cofactor. Post-translationally, the N-terminus is blocked. ISGylated. Expressed predominantly in Leydig cells (at protein level). Also expressed in ovary, spleen, heart, liver, kidney and pancreas and in a number of cancer cell lines. As to expression, widely expressed with highest levels in kidney, testis, uterus, ovary, prostate, placenta and fetal liver.

It is found in the cytoplasm. It localises to the nucleus. The enzyme catalyses [thioredoxin]-dithiol + NADP(+) = [thioredoxin]-disulfide + NADPH + H(+). The catalysed reaction is H2O2 + NADPH + H(+) = NADP(+) + 2 H2O. Reduces disulfideprotein thioredoxin (Trx) to its dithiol-containing form. Homodimeric flavoprotein involved in the regulation of cellular redox reactions, growth and differentiation. Contains a selenocysteine residue at the C-terminal active site that is essential for catalysis. Also has reductase activity on hydrogen peroxide (H2O2). Its function is as follows. Induces actin and tubulin polymerization, leading to formation of cell membrane protrusions. Functionally, enhances the transcriptional activity of estrogen receptors ESR1 and ESR2. In terms of biological role, enhances the transcriptional activity of the estrogen receptor ESR2 only. Mediates cell death induced by a combination of interferon-beta and retinoic acid. In Homo sapiens (Human), this protein is Thioredoxin reductase 1, cytoplasmic.